The chain runs to 335 residues: Tryptophan--tRNA ligase (335 aa).

Residues 13–15 (QPS) and 21–22 (GN) contribute to the ATP site. Residues 14 to 22 (PSGNLTIGN) carry the 'HIGH' region motif. Position 136 (aspartate 136) interacts with L-tryptophan. ATP contacts are provided by residues 148–150 (GQD), isoleucine 187, and 196–200 (KMSKS). The short motif at 196–200 (KMSKS) is the 'KMSKS' region element.

This sequence belongs to the class-I aminoacyl-tRNA synthetase family. Homodimer.

Its subcellular location is the cytoplasm. The catalysed reaction is tRNA(Trp) + L-tryptophan + ATP = L-tryptophyl-tRNA(Trp) + AMP + diphosphate + H(+). Its function is as follows. Catalyzes the attachment of tryptophan to tRNA(Trp). The protein is Tryptophan--tRNA ligase of Buchnera aphidicola subsp. Acyrthosiphon pisum (strain APS) (Acyrthosiphon pisum symbiotic bacterium).